We begin with the raw amino-acid sequence, 633 residues long: Chaperone protein DnaK (633 aa).

At Thr-196 the chain carries Phosphothreonine; by autocatalysis. The interval Asn-594–Lys-633 is disordered. Positions His-610–Gly-619 are enriched in gly residues.

This sequence belongs to the heat shock protein 70 family.

Acts as a chaperone. This chain is Chaperone protein DnaK, found in Chlorobaculum tepidum (strain ATCC 49652 / DSM 12025 / NBRC 103806 / TLS) (Chlorobium tepidum).